Consider the following 688-residue polypeptide: Glycine--tRNA ligase beta subunit (688 aa).

It belongs to the class-II aminoacyl-tRNA synthetase family. Tetramer of two alpha and two beta subunits.

It localises to the cytoplasm. The enzyme catalyses tRNA(Gly) + glycine + ATP = glycyl-tRNA(Gly) + AMP + diphosphate. This is Glycine--tRNA ligase beta subunit from Colwellia psychrerythraea (strain 34H / ATCC BAA-681) (Vibrio psychroerythus).